Here is a 292-residue protein sequence, read N- to C-terminus: MAAITASMVAELRAKTDAPMMECKKALTEADGDLDKAEELLRVKLGNKASKAASRVTAEGVVASFIDGTTGVLVELNCETDFVSKNDDFLAFSAKVAELIAKQNPADVAALSALEIDGVSVEATRTALIGKIGENLTIRRFARYANGGKLVSYLHGTRIGVMVEFDGDEAAAKDVAMHVAAMKPVSLSAEQVPADLIAKERSIAEQKAAESGKPAEIVAKMVEGSVQKYLKEVSLFNQPFVKNDKQTVEQMLKAANTTVKGFTLFVVGEGIEKKQDDFAAEVAAQVAAAQKG.

Positions 80 to 83 (TDFV) are involved in Mg(2+) ion dislocation from EF-Tu.

This sequence belongs to the EF-Ts family.

The protein localises to the cytoplasm. Functionally, associates with the EF-Tu.GDP complex and induces the exchange of GDP to GTP. It remains bound to the aminoacyl-tRNA.EF-Tu.GTP complex up to the GTP hydrolysis stage on the ribosome. The sequence is that of Elongation factor Ts from Cupriavidus necator (strain ATCC 17699 / DSM 428 / KCTC 22496 / NCIMB 10442 / H16 / Stanier 337) (Ralstonia eutropha).